A 93-amino-acid chain; its full sequence is Large ribosomal subunit protein bL27 (93 aa).

Residues 1–22 form a disordered region; the sequence is MAHKKAGGSSRNGRDSAGRRLG.

This sequence belongs to the bacterial ribosomal protein bL27 family.

The chain is Large ribosomal subunit protein bL27 from Parvibaculum lavamentivorans (strain DS-1 / DSM 13023 / NCIMB 13966).